The primary structure comprises 773 residues: Protein YhgF (773 aa).

An S1 motif domain is found at 651 to 720 (GMILEGAVTN…QRKRIALTMR (70 aa)). A disordered region spans residues 721–773 (LDEQPGETNARRGGGNERPQNNRPAAKPRGREAQPAGNSAMMDALAAAMGKKR).

This is Protein YhgF (yhgF) from Escherichia coli (strain K12).